Reading from the N-terminus, the 217-residue chain is Non-structural protein NS3 (217 aa).

Belongs to the orbivirus NS3 family.

Functionally, may play a role in the release of virions from infected cells. The chain is Non-structural protein NS3 (Segment-10) from Camelus dromedarius (Dromedary).